Reading from the N-terminus, the 256-residue chain is uncharacterized protein (256 aa).

The signal sequence occupies residues methionine 1–glycine 24. Cysteine 25 is lipidated: N-palmitoyl cysteine. Residue cysteine 25 is the site of S-diacylglycerol cysteine attachment.

This sequence belongs to the staphylococcal tandem lipoprotein family.

The protein localises to the cell membrane. This is an uncharacterized protein from Staphylococcus aureus (strain MW2).